Here is a 226-residue protein sequence, read N- to C-terminus: uncharacterized protein (226 aa).

This is an uncharacterized protein from Bacillus subtilis (strain 168).